Reading from the N-terminus, the 51-residue chain is Insulin (51 aa).

3 cysteine pairs are disulfide-bonded: cysteine 7–cysteine 37, cysteine 19–cysteine 50, and cysteine 36–cysteine 41.

This sequence belongs to the insulin family. Heterodimer of a B chain and an A chain linked by two disulfide bonds.

It localises to the secreted. Its function is as follows. Insulin decreases blood glucose concentration. It increases cell permeability to monosaccharides, amino acids and fatty acids. It accelerates glycolysis, the pentose phosphate cycle, and glycogen synthesis in liver. The sequence is that of Insulin (INS) from Didelphis virginiana (North American opossum).